The sequence spans 225 residues: Ribosome maturation factor RimM (225 aa).

One can recognise a PRC barrel domain in the interval 144-225; the sequence is ADEFYWVDLI…RIVVDWEADY (82 aa).

Belongs to the RimM family. In terms of assembly, binds ribosomal protein uS19.

The protein resides in the cytoplasm. Functionally, an accessory protein needed during the final step in the assembly of 30S ribosomal subunit, possibly for assembly of the head region. Essential for efficient processing of 16S rRNA. May be needed both before and after RbfA during the maturation of 16S rRNA. It has affinity for free ribosomal 30S subunits but not for 70S ribosomes. The chain is Ribosome maturation factor RimM from Burkholderia orbicola (strain MC0-3).